A 178-amino-acid chain; its full sequence is Cytochrome b6-f complex iron-sulfur subunit (178 aa).

The chain crosses the membrane as a helical span at residues 20–42; it reads LLTFGTATGVALGALYPVANYFM. Residues 65 to 161 form the Rieske domain; it reads KTGWLATHQA…VDIEDDAVLV (97 aa). The [2Fe-2S] cluster site is built by cysteine 107, histidine 109, cysteine 125, and histidine 128. A disulfide bond links cysteine 112 and cysteine 127.

The protein belongs to the Rieske iron-sulfur protein family. In terms of assembly, the 4 large subunits of the cytochrome b6-f complex are cytochrome b6, subunit IV (17 kDa polypeptide, PetD), cytochrome f and the Rieske protein, while the 4 small subunits are PetG, PetL, PetM and PetN. The complex functions as a dimer. [2Fe-2S] cluster serves as cofactor.

Its subcellular location is the cellular thylakoid membrane. It carries out the reaction 2 oxidized [plastocyanin] + a plastoquinol + 2 H(+)(in) = 2 reduced [plastocyanin] + a plastoquinone + 4 H(+)(out). In terms of biological role, component of the cytochrome b6-f complex, which mediates electron transfer between photosystem II (PSII) and photosystem I (PSI), cyclic electron flow around PSI, and state transitions. The polypeptide is Cytochrome b6-f complex iron-sulfur subunit (Prochlorococcus marinus (strain MIT 9215)).